A 186-amino-acid polypeptide reads, in one-letter code: Peptide deformylase (186 aa).

Fe cation is bound by residues C113 and H157. Residue E158 is part of the active site. H161 is a Fe cation binding site.

It belongs to the polypeptide deformylase family. Requires Fe(2+) as cofactor.

The enzyme catalyses N-terminal N-formyl-L-methionyl-[peptide] + H2O = N-terminal L-methionyl-[peptide] + formate. In terms of biological role, removes the formyl group from the N-terminal Met of newly synthesized proteins. Requires at least a dipeptide for an efficient rate of reaction. N-terminal L-methionine is a prerequisite for activity but the enzyme has broad specificity at other positions. The polypeptide is Peptide deformylase (Malacoplasma penetrans (strain HF-2) (Mycoplasma penetrans)).